A 101-amino-acid chain; its full sequence is DNA-binding protein Fis (101 aa).

The segment at residues 77–96 is a DNA-binding region (H-T-H motif); that stretch reads QTRAANMLGINRGTLRKKLK.

This sequence belongs to the transcriptional regulatory Fis family. Homodimer.

Its function is as follows. Activates ribosomal RNA transcription. Plays a direct role in upstream activation of rRNA promoters. The polypeptide is DNA-binding protein Fis (Shewanella sediminis (strain HAW-EB3)).